The sequence spans 271 residues: 3-methyl-2-oxobutanoate hydroxymethyltransferase 1 (271 aa).

Mg(2+) contacts are provided by Asp53 and Asp92. 3-methyl-2-oxobutanoate contacts are provided by residues 53–54 (DS), Asp92, and Lys120. Glu122 lines the Mg(2+) pocket. The active-site Proton acceptor is the Glu189.

This sequence belongs to the PanB family. In terms of assembly, homodecamer; pentamer of dimers. Mg(2+) is required as a cofactor.

It is found in the cytoplasm. The enzyme catalyses 3-methyl-2-oxobutanoate + (6R)-5,10-methylene-5,6,7,8-tetrahydrofolate + H2O = 2-dehydropantoate + (6S)-5,6,7,8-tetrahydrofolate. Its pathway is cofactor biosynthesis; (R)-pantothenate biosynthesis; (R)-pantoate from 3-methyl-2-oxobutanoate: step 1/2. Catalyzes the reversible reaction in which hydroxymethyl group from 5,10-methylenetetrahydrofolate is transferred onto alpha-ketoisovalerate to form ketopantoate. This is 3-methyl-2-oxobutanoate hydroxymethyltransferase 1 from Burkholderia ambifaria (strain ATCC BAA-244 / DSM 16087 / CCUG 44356 / LMG 19182 / AMMD) (Burkholderia cepacia (strain AMMD)).